The sequence spans 250 residues: 2,3-bisphosphoglycerate-dependent phosphoglycerate mutase (250 aa).

Substrate-binding positions include 10 to 17, 23 to 24, R62, 89 to 92, K100, 116 to 117, and 185 to 186; these read RHGESQWN, TG, ERHY, RR, and GN. H11 functions as the Tele-phosphohistidine intermediate in the catalytic mechanism. The active-site Proton donor/acceptor is the E89.

This sequence belongs to the phosphoglycerate mutase family. BPG-dependent PGAM subfamily. In terms of assembly, homodimer.

It catalyses the reaction (2R)-2-phosphoglycerate = (2R)-3-phosphoglycerate. It participates in carbohydrate degradation; glycolysis; pyruvate from D-glyceraldehyde 3-phosphate: step 3/5. In terms of biological role, catalyzes the interconversion of 2-phosphoglycerate and 3-phosphoglycerate. The polypeptide is 2,3-bisphosphoglycerate-dependent phosphoglycerate mutase (Shigella boydii serotype 4 (strain Sb227)).